We begin with the raw amino-acid sequence, 88 residues long: Small ribosomal subunit protein uS17 (88 aa).

It belongs to the universal ribosomal protein uS17 family. In terms of assembly, part of the 30S ribosomal subunit.

In terms of biological role, one of the primary rRNA binding proteins, it binds specifically to the 5'-end of 16S ribosomal RNA. This chain is Small ribosomal subunit protein uS17, found in Prochlorococcus marinus (strain MIT 9312).